The chain runs to 305 residues: Ornithine carbamoyltransferase (305 aa).

Carbamoyl phosphate contacts are provided by residues 48–51, R99, and 126–129; these read STRT and HPCQ. Residues N157, D222, and 226–227 contribute to the L-ornithine site; that span reads SM. Carbamoyl phosphate is bound by residues 262–263 and R290; that span reads CL.

This sequence belongs to the aspartate/ornithine carbamoyltransferase superfamily. OTCase family.

Its subcellular location is the cytoplasm. It carries out the reaction carbamoyl phosphate + L-ornithine = L-citrulline + phosphate + H(+). It functions in the pathway amino-acid biosynthesis; L-arginine biosynthesis; L-arginine from L-ornithine and carbamoyl phosphate: step 1/3. In terms of biological role, reversibly catalyzes the transfer of the carbamoyl group from carbamoyl phosphate (CP) to the N(epsilon) atom of ornithine (ORN) to produce L-citrulline. The protein is Ornithine carbamoyltransferase (argF) of Methanocaldococcus jannaschii (strain ATCC 43067 / DSM 2661 / JAL-1 / JCM 10045 / NBRC 100440) (Methanococcus jannaschii).